Consider the following 340-residue polypeptide: Phosphoribosylformylglycinamidine cyclo-ligase (340 aa).

The protein belongs to the AIR synthase family.

Its subcellular location is the cytoplasm. It catalyses the reaction 2-formamido-N(1)-(5-O-phospho-beta-D-ribosyl)acetamidine + ATP = 5-amino-1-(5-phospho-beta-D-ribosyl)imidazole + ADP + phosphate + H(+). It participates in purine metabolism; IMP biosynthesis via de novo pathway; 5-amino-1-(5-phospho-D-ribosyl)imidazole from N(2)-formyl-N(1)-(5-phospho-D-ribosyl)glycinamide: step 2/2. The protein is Phosphoribosylformylglycinamidine cyclo-ligase of Lactococcus lactis subsp. cremoris (strain MG1363).